The primary structure comprises 252 residues: Geranylgeranylglyceryl phosphate synthase (252 aa).

Mg(2+)-binding residues include D27 and S56. Sn-glycerol 1-phosphate-binding positions include Y175–G181, G206–G207, and G228–T229.

The protein belongs to the GGGP/HepGP synthase family. Group II subfamily. The cofactor is Mg(2+).

It localises to the cytoplasm. It carries out the reaction sn-glycerol 1-phosphate + (2E,6E,10E)-geranylgeranyl diphosphate = sn-3-O-(geranylgeranyl)glycerol 1-phosphate + diphosphate. The protein operates within membrane lipid metabolism; glycerophospholipid metabolism. Its function is as follows. Prenyltransferase that catalyzes the transfer of the geranylgeranyl moiety of geranylgeranyl diphosphate (GGPP) to the C3 hydroxyl of sn-glycerol-1-phosphate (G1P). This reaction is the first ether-bond-formation step in the biosynthesis of archaeal membrane lipids. The sequence is that of Geranylgeranylglyceryl phosphate synthase from Pyrococcus abyssi (strain GE5 / Orsay).